The chain runs to 365 residues: Galactoside alpha-(1,2)-fucosyltransferase 1 (365 aa).

The Cytoplasmic segment spans residues 1-8; that stretch reads MWPLSHRH. A helical; Signal-anchor for type II membrane protein transmembrane segment spans residues 9-25; sequence LCLAFLLVCVLSAISFF. The Lumenal segment spans residues 26–365; that stretch reads LHLYQDSIRH…LSPLWTLAEP (340 aa). N-linked (GlcNAc...) asparagine glycans are attached at residues Asn-65, Asn-301, and Asn-327.

This sequence belongs to the glycosyltransferase 11 family.

Its subcellular location is the golgi apparatus. It localises to the golgi stack membrane. The catalysed reaction is a beta-D-galactosyl-(1-&gt;4)-N-acetyl-beta-D-glucosaminyl derivative + GDP-beta-L-fucose = an alpha-L-Fuc-(1-&gt;2)-beta-D-Gal-(1-&gt;4)-beta-D-GlcNAc derivative + GDP + H(+). It carries out the reaction a ganglioside GA1 + GDP-beta-L-fucose = a ganglioside Fuc-GA1 + GDP + H(+). The enzyme catalyses a beta-D-Gal-(1-&gt;3)-beta-D-GlcNAc-(1-&gt;3)-beta-D-Gal-(1-&gt;4)-beta-D-Glc-(1&lt;-&gt;1')-Cer(d18:1(4E)) + GDP-beta-L-fucose = alpha-L-fucosyl-(1-&gt;2)- beta-D-galactosyl-(1-&gt;3)-N-acetyl-beta-D-glucosaminyl-(1-&gt;3)-beta-D-galactosyl-(1-&gt;4)-beta-D-glucosyl-(1&lt;-&gt;1')-N-acylsphing-4-enine + GDP + H(+). It catalyses the reaction a neolactoside nLc4Cer(d18:1(4E)) + GDP-beta-L-fucose = a neolactoside IV(2)-alpha-Fuc-nLc4Cer(d18:1(4E)) + GDP + H(+). The catalysed reaction is a ganglioside GM1 + GDP-beta-L-fucose = a ganglioside Fuc-GM1 + GDP + H(+). It carries out the reaction beta-D-galactosyl-(1-&gt;3)-N-acetyl-D-galactosamine + GDP-beta-L-fucose = alpha-L-fucosyl-(1-&gt;2)-beta-D-galactosyl-(1-&gt;3)-N-acetyl-D-galactosamine + GDP + H(+). It functions in the pathway protein modification; protein glycosylation. Its function is as follows. Catalyzes the transfer of L-fucose, from a guanosine diphosphate-beta-L-fucose, to the terminal galactose residue of glycoconjugates through an alpha(1,2) linkage leading to H antigen synthesis that is an intermediate substrate in the synthesis of ABO blood group antigens. H antigen is essential for maturation of the glomerular layer of the main olfactory bulb, in cell migration and early cell-cell contacts during tumor associated angiogenesis. Preferentially fucosylates soluble lactose and to a lesser extent fucosylates glycolipids gangliosides GA1 and GM1a. The protein is Galactoside alpha-(1,2)-fucosyltransferase 1 of Leontopithecus chrysomelas (Golden-headed lion tamarin).